Consider the following 949-residue polypeptide: Probable transcriptional regulatory protein STB4 (949 aa).

The zn(2)-C6 fungal-type DNA-binding region spans 87–113 (CELCKKRKVKCDGNNPCLNCSKHQKEC). Low complexity-rich tracts occupy residues 164-178 (DGVSSSASNSPNPNS) and 200-212 (SGSNLNGENNNNS). 2 disordered regions span residues 164-214 (DGVS…NSFP) and 862-888 (GEREENADERQENPHNNSKRVPLATRS). Basic and acidic residues predominate over residues 862-874 (GEREENADERQEN).

It localises to the nucleus. Binds to SIN3. The protein is Probable transcriptional regulatory protein STB4 (STB4) of Saccharomyces cerevisiae (strain ATCC 204508 / S288c) (Baker's yeast).